The following is a 514-amino-acid chain: 1,25-dihydroxyvitamin D(3) 24-hydroxylase, mitochondrial (514 aa).

Residues 1–35 (MSCPIDKRRTLIAFLRRLRDLGQPPRSVTSKASAS) constitute a mitochondrion transit peptide. Heme is bound at residue Cys462.

This sequence belongs to the cytochrome P450 family. Requires heme as cofactor.

Its subcellular location is the mitochondrion. It carries out the reaction calcitriol + 2 reduced [adrenodoxin] + O2 + 2 H(+) = calcitetrol + 2 oxidized [adrenodoxin] + H2O. The enzyme catalyses calcitetrol + 2 reduced [adrenodoxin] + O2 + 2 H(+) = (1S)-1,25-dihydroxy-24-oxocalciol + 2 oxidized [adrenodoxin] + 2 H2O. The catalysed reaction is (1S)-1,25-dihydroxy-24-oxocalciol + 2 reduced [adrenodoxin] + O2 + 2 H(+) = (1S)-1,23,25-trihydroxy-24-oxocalciol + 2 oxidized [adrenodoxin] + H2O. It catalyses the reaction (1S)-1,23-dihydroxy-24,25,26,27-tetranorcalciol + 2 reduced [adrenodoxin] + O2 + 2 H(+) = (1S)-1-hydroxy-23-oxo-24,25,26,27-tetranorcalciol + 2 oxidized [adrenodoxin] + 2 H2O. It carries out the reaction (1S)-1-hydroxy-23-oxo-24,25,26,27-tetranorcalciol + 2 reduced [adrenodoxin] + O2 + H(+) = calcitroate + 2 oxidized [adrenodoxin] + H2O. The enzyme catalyses calcidiol + 2 reduced [adrenodoxin] + O2 + 2 H(+) = secalciferol + 2 oxidized [adrenodoxin] + H2O. The catalysed reaction is secalciferol + 2 reduced [adrenodoxin] + O2 + 2 H(+) = 25-hydroxy-24-oxocalciol + 2 oxidized [adrenodoxin] + 2 H2O. It catalyses the reaction 25-hydroxy-24-oxocalciol + 2 reduced [adrenodoxin] + O2 + 2 H(+) = 23S,25-dihydroxy-24-oxocholecalciferol + 2 oxidized [adrenodoxin] + H2O. It carries out the reaction 20S,23-dihydroxycholecalciferol + 2 reduced [adrenodoxin] + O2 + 2 H(+) = 20S,23,25-trihydroxycholecalciferol + 2 oxidized [adrenodoxin] + H2O. The enzyme catalyses 20S,23-dihydroxycholecalciferol + 2 reduced [adrenodoxin] + O2 + 2 H(+) = 20S,23,24-trihydroxycholecalciferol + 2 oxidized [adrenodoxin] + H2O. The catalysed reaction is 20S-hydroxycholecalciferol + 2 reduced [adrenodoxin] + O2 + 2 H(+) = 20S,25-dihydroxycholecalciferol + 2 oxidized [adrenodoxin] + H2O. It catalyses the reaction 20S-hydroxycholecalciferol + 2 reduced [adrenodoxin] + O2 + 2 H(+) = 20S,24S-dihydroxycholecalciferol + 2 oxidized [adrenodoxin] + H2O. It carries out the reaction 20S-hydroxycholecalciferol + 2 reduced [adrenodoxin] + O2 + 2 H(+) = 20S,24R-dihydroxycholecalciferol + 2 oxidized [adrenodoxin] + H2O. Functionally, a cytochrome P450 monooxygenase with a key role in vitamin D catabolism and calcium homeostasis. Via C24-oxidation pathway, catalyzes the inactivation of both the vitamin D precursor calcidiol (25-hydroxyvitamin D(3)) and the active hormone calcitriol (1-alpha,25-dihydroxyvitamin D(3)). With initial hydroxylation at C-24 (via C24-oxidation pathway), performs a sequential 6-step oxidation of calcitriol leading to the formation of the biliary metabolite calcitroic acid. Hydroxylates at C-24 or C-25 other vitamin D active metabolites, such as CYP11A1-derived secosteroids 20S-hydroxycholecalciferol and 20S,23-dihydroxycholecalciferol. Mechanistically, uses molecular oxygen inserting one oxygen atom into a substrate, and reducing the second into a water molecule, with two electrons provided by NADPH via FDXR/adrenodoxin reductase and FDX1/adrenodoxin. The sequence is that of 1,25-dihydroxyvitamin D(3) 24-hydroxylase, mitochondrial (Cyp24a1) from Rattus norvegicus (Rat).